The chain runs to 107 residues: MTHTHDHEHDHNHEPDYITLVEENGNESLFQILITIDGQEEFGKNYVVLQPTEFEEDEQGLIDVLAYSFTENADGTEGDLQPIPEDAEDEWDMIEEVFNSFMDEQED.

The protein belongs to the UPF0473 family.

This chain is UPF0473 protein LACR_0139, found in Lactococcus lactis subsp. cremoris (strain SK11).